A 584-amino-acid polypeptide reads, in one-letter code: Arginine--tRNA ligase (584 aa).

The short motif at 127–137 (PNLAKEMHVGH) is the 'HIGH' region element.

It belongs to the class-I aminoacyl-tRNA synthetase family. In terms of assembly, monomer.

It is found in the cytoplasm. The catalysed reaction is tRNA(Arg) + L-arginine + ATP = L-arginyl-tRNA(Arg) + AMP + diphosphate. The polypeptide is Arginine--tRNA ligase (Alcanivorax borkumensis (strain ATCC 700651 / DSM 11573 / NCIMB 13689 / SK2)).